An 863-amino-acid polypeptide reads, in one-letter code: Dynamin-3 (863 aa).

The region spanning 28-294 (LLELPQIAVV…LTNHIRDTLP (267 aa)) is the Dynamin-type G domain. The segment at 38-45 (GGQSAGKS) is G1 motif. 38 to 46 (GGQSAGKSS) provides a ligand contact to GTP. A G2 motif region spans residues 64–66 (VTR). Positions 136–139 (DLPG) are G3 motif. The tract at residues 205–208 (TKLD) is G4 motif. 205–211 (TKLDLMD) serves as a coordination point for GTP. Tyrosine 231 carries the phosphotyrosine modification. Residues 235–238 (VNRS) form a G5 motif region. 236 to 239 (NRSQ) is a GTP binding site. Residue lysine 299 is modified to N6-acetyllysine. The PH domain maps to 515 to 621 (QVIRKGWLTV…WKASLLRAGV (107 aa)). Tyrosine 593 carries the post-translational modification Phosphotyrosine. Lysine 594 carries the N6-acetyllysine modification. Disordered stretches follow at residues 626 to 647 (SVGS…SMDP) and 742 to 863 (ATVS…SLLD). The segment covering 627–642 (VGSNKTENDENGQAEN) has biased composition (polar residues). Positions 653 to 744 (VETIRNLVDS…IIGDINTATV (92 aa)) constitute a GED domain. Phosphoserine occurs at positions 763 and 767. 2 stretches are compositionally biased toward pro residues: residues 791-816 (PAIP…PPFP) and 826-849 (PQVP…PSPT). Position 847 is a phosphoserine (serine 847).

This sequence belongs to the TRAFAC class dynamin-like GTPase superfamily. Dynamin/Fzo/YdjA family.

Its subcellular location is the cytoplasm. It is found in the cytoskeleton. It catalyses the reaction GTP + H2O = GDP + phosphate + H(+). Microtubule-associated force-producing protein involved in producing microtubule bundles and able to bind and hydrolyze GTP. Most probably involved in vesicular trafficking processes, in particular endocytosis. The polypeptide is Dynamin-3 (Dnm3) (Mus musculus (Mouse)).